A 185-amino-acid chain; its full sequence is ATP-dependent protease subunit HslV (185 aa).

The active site involves T12. 3 residues coordinate Na(+): A168, C171, and T174.

Belongs to the peptidase T1B family. HslV subfamily. In terms of assembly, a double ring-shaped homohexamer of HslV is capped on each side by a ring-shaped HslU homohexamer. The assembly of the HslU/HslV complex is dependent on binding of ATP.

The protein resides in the cytoplasm. It carries out the reaction ATP-dependent cleavage of peptide bonds with broad specificity.. With respect to regulation, allosterically activated by HslU binding. Functionally, protease subunit of a proteasome-like degradation complex believed to be a general protein degrading machinery. This is ATP-dependent protease subunit HslV from Ruegeria pomeroyi (strain ATCC 700808 / DSM 15171 / DSS-3) (Silicibacter pomeroyi).